Here is a 709-residue protein sequence, read N- to C-terminus: PP2C-like domain-containing protein CG9801 (709 aa).

3 disordered regions span residues 121–222 (DCYG…NSER), 503–530 (LHPSTPPTRPARQSKAESPPNNAPSRPK), and 678–709 (GGGEEHNNGNENGDGGAISPVLQSKEFKETNF). Polar residues predominate over residues 130-143 (PPVQVATQNSTRLT). The span at 182-196 (ANLAAASAGTDAGKA) shows a compositional bias: low complexity. Residues 197–217 (NSDQNNRNVLNAKTEVSTDGD) show a composition bias toward polar residues. The PPM-type phosphatase domain maps to 259-503 (SVSLYETNML…KSASAIYARL (245 aa)).

This is PP2C-like domain-containing protein CG9801 from Drosophila melanogaster (Fruit fly).